The primary structure comprises 458 residues: Bifunctional protein GlmU (458 aa).

The tract at residues 1 to 230 (MHKRTAVVLA…EREILGINSR (230 aa)) is pyrophosphorylase. UDP-N-acetyl-alpha-D-glucosamine-binding positions include 9–12 (LAAG), Lys23, Gln73, and 78–79 (GT). Mg(2+) is bound at residue Asp103. UDP-N-acetyl-alpha-D-glucosamine is bound by residues Gly140, Glu155, Asn170, and Asn228. Asn228 provides a ligand contact to Mg(2+). The interval 231 to 251 (VQLAEAEAVLQDRLRRKWMDA) is linker. Positions 252–458 (GVTLIDPPSV…FLGRKHKGSQ (207 aa)) are N-acetyltransferase. 2 residues coordinate UDP-N-acetyl-alpha-D-glucosamine: Arg333 and Lys351. His363 serves as the catalytic Proton acceptor. The UDP-N-acetyl-alpha-D-glucosamine site is built by Tyr366 and Asn377. Acetyl-CoA-binding positions include Ala380, 386–387 (NY), Ser405, Ala423, and Arg440.

The protein in the N-terminal section; belongs to the N-acetylglucosamine-1-phosphate uridyltransferase family. It in the C-terminal section; belongs to the transferase hexapeptide repeat family. In terms of assembly, homotrimer. It depends on Mg(2+) as a cofactor.

It localises to the cytoplasm. It carries out the reaction alpha-D-glucosamine 1-phosphate + acetyl-CoA = N-acetyl-alpha-D-glucosamine 1-phosphate + CoA + H(+). The catalysed reaction is N-acetyl-alpha-D-glucosamine 1-phosphate + UTP + H(+) = UDP-N-acetyl-alpha-D-glucosamine + diphosphate. Its pathway is nucleotide-sugar biosynthesis; UDP-N-acetyl-alpha-D-glucosamine biosynthesis; N-acetyl-alpha-D-glucosamine 1-phosphate from alpha-D-glucosamine 6-phosphate (route II): step 2/2. It functions in the pathway nucleotide-sugar biosynthesis; UDP-N-acetyl-alpha-D-glucosamine biosynthesis; UDP-N-acetyl-alpha-D-glucosamine from N-acetyl-alpha-D-glucosamine 1-phosphate: step 1/1. The protein operates within bacterial outer membrane biogenesis; LPS lipid A biosynthesis. In terms of biological role, catalyzes the last two sequential reactions in the de novo biosynthetic pathway for UDP-N-acetylglucosamine (UDP-GlcNAc). The C-terminal domain catalyzes the transfer of acetyl group from acetyl coenzyme A to glucosamine-1-phosphate (GlcN-1-P) to produce N-acetylglucosamine-1-phosphate (GlcNAc-1-P), which is converted into UDP-GlcNAc by the transfer of uridine 5-monophosphate (from uridine 5-triphosphate), a reaction catalyzed by the N-terminal domain. In Heliobacterium modesticaldum (strain ATCC 51547 / Ice1), this protein is Bifunctional protein GlmU.